The sequence spans 550 residues: Probable acyl-activating enzyme 9 (550 aa).

This sequence belongs to the ATP-dependent AMP-binding enzyme family. As to expression, expressed in leaves, flowers and developing seeds.

May act as an acid--thiol ligase that activates carboxylic acids by forming acyl-CoAs. The polypeptide is Probable acyl-activating enzyme 9 (AEE9) (Arabidopsis thaliana (Mouse-ear cress)).